The chain runs to 198 residues: Guanylyl cyclase-activating protein 2 (198 aa).

Gly-2 is lipidated: N-myristoyl glycine. 4 EF-hand domains span residues 16-51 (DVAE…QDNH), 52-87 (EAAE…VLRG), 88-123 (KLEH…IYKL), and 139-174 (TPEE…DKWV). The Ca(2+) site is built by Asp-65, Asn-67, Asp-69, Thr-71, Glu-76, Asp-101, Asp-103, Asn-105, Cys-107, Glu-112, Asp-152, Asn-154, Asp-156, Gln-158, and Glu-163.

As to quaternary structure, undergoes dimerization at low calcium ions concentration, while the presence of calcium ions inhibits its dimerization. Dimerization correlates with its ability to activate GC. In terms of tissue distribution, retina and pineal gland.

In terms of biological role, stimulates synthesis of cGMP in photoreceptors. Thought to mediate Ca(2+)-sensitive regulation of retinal guanylyl cyclase (GC), a key event in recovery of the dark state of rod photoreceptors following light exposure. The protein is Guanylyl cyclase-activating protein 2 (GUCA1B) of Gallus gallus (Chicken).